Reading from the N-terminus, the 210-residue chain is MIEGLLGRKIGMTQVFDATGQVIPVTIIEVGPCVVTQIRTKERDGYEAVQIGYQEVKAKSLTRPEQGHLRGAGKLLRHLREFRADNIADHKVGDVLTVEMFTPGQRVDVIGTSKGRGFQGVVKRHGFGGGPRTHGQSDRLRAPGSIGAGTDPGHVLKNTRMAGRMGNQRVTVQNLTVVDVVPERNLLLVRGSIPGAKNGLVMVRRAIKGS.

The disordered stretch occupies residues 125–151 (HGFGGGPRTHGQSDRLRAPGSIGAGTD).

Belongs to the universal ribosomal protein uL3 family. Part of the 50S ribosomal subunit. Forms a cluster with proteins L14 and L19.

Functionally, one of the primary rRNA binding proteins, it binds directly near the 3'-end of the 23S rRNA, where it nucleates assembly of the 50S subunit. The polypeptide is Large ribosomal subunit protein uL3 (Roseiflexus sp. (strain RS-1)).